The chain runs to 173 residues: Photosystem I assembly protein Ycf3 (173 aa).

TPR repeat units lie at residues 35 to 68 (AFVY…EEDT), 72 to 105 (GYIL…NPRL), and 120 to 153 (GEKE…APNN).

The protein belongs to the Ycf3 family.

The protein localises to the cellular thylakoid membrane. Functionally, essential for the assembly of the photosystem I (PSI) complex. May act as a chaperone-like factor to guide the assembly of the PSI subunits. The sequence is that of Photosystem I assembly protein Ycf3 from Nostoc punctiforme (strain ATCC 29133 / PCC 73102).